We begin with the raw amino-acid sequence, 570 residues long: Proline--tRNA ligase (570 aa).

The protein belongs to the class-II aminoacyl-tRNA synthetase family. ProS type 1 subfamily. Homodimer.

Its subcellular location is the cytoplasm. The enzyme catalyses tRNA(Pro) + L-proline + ATP = L-prolyl-tRNA(Pro) + AMP + diphosphate. Functionally, catalyzes the attachment of proline to tRNA(Pro) in a two-step reaction: proline is first activated by ATP to form Pro-AMP and then transferred to the acceptor end of tRNA(Pro). As ProRS can inadvertently accommodate and process non-cognate amino acids such as alanine and cysteine, to avoid such errors it has two additional distinct editing activities against alanine. One activity is designated as 'pretransfer' editing and involves the tRNA(Pro)-independent hydrolysis of activated Ala-AMP. The other activity is designated 'posttransfer' editing and involves deacylation of mischarged Ala-tRNA(Pro). The misacylated Cys-tRNA(Pro) is not edited by ProRS. The polypeptide is Proline--tRNA ligase (Neisseria gonorrhoeae (strain ATCC 700825 / FA 1090)).